The following is a 381-amino-acid chain: N-acetyldiaminopimelate deacetylase (381 aa).

Asp-71 is a catalytic residue. Catalysis depends on Glu-130, which acts as the Proton acceptor.

It belongs to the peptidase M20A family. N-acetyldiaminopimelate deacetylase subfamily.

It catalyses the reaction N-acetyl-(2S,6S)-2,6-diaminopimelate + H2O = (2S,6S)-2,6-diaminopimelate + acetate. It functions in the pathway amino-acid biosynthesis; L-lysine biosynthesis via DAP pathway; LL-2,6-diaminopimelate from (S)-tetrahydrodipicolinate (acetylase route): step 3/3. Its function is as follows. Catalyzes the conversion of N-acetyl-diaminopimelate to diaminopimelate and acetate. The polypeptide is N-acetyldiaminopimelate deacetylase (Ligilactobacillus salivarius (strain UCC118) (Lactobacillus salivarius)).